Here is a 598-residue protein sequence, read N- to C-terminus: Beta-fructofuranosidase, insoluble isoenzyme 2 (598 aa).

The N-terminal stretch at Met-1 to Ala-25 is a signal peptide. Residue Asp-69 is part of the active site. 3 N-linked (GlcNAc...) asparagine glycosylation sites follow: Asn-164, Asn-189, and Asn-348.

Belongs to the glycosyl hydrolase 32 family.

It is found in the secreted. The protein localises to the extracellular space. It localises to the apoplast. Its subcellular location is the cell wall. The enzyme catalyses Hydrolysis of terminal non-reducing beta-D-fructofuranoside residues in beta-D-fructofuranosides.. Its function is as follows. May play a role in sucrose partitioning during seed development. In Oryza sativa subsp. indica (Rice), this protein is Beta-fructofuranosidase, insoluble isoenzyme 2 (CIN2).